The primary structure comprises 201 residues: Recombination protein RecR (201 aa).

The segment at 60 to 75 (CHECGNVDTSDPCTIC) adopts a C4-type zinc-finger fold. The Toprim domain occupies 83–178 (SILVVVEDVS…KVTKLAHGVP (96 aa)).

It belongs to the RecR family.

May play a role in DNA repair. It seems to be involved in an RecBC-independent recombinational process of DNA repair. It may act with RecF and RecO. The chain is Recombination protein RecR from Methylobacterium nodulans (strain LMG 21967 / CNCM I-2342 / ORS 2060).